Here is a 272-residue protein sequence, read N- to C-terminus: Dermonecrotic toxin LspaSicTox-alphaII1 (272 aa).

His-5 is an active-site residue. Mg(2+)-binding residues include Glu-25 and Asp-27. His-41 (nucleophile) is an active-site residue. 2 cysteine pairs are disulfide-bonded: Cys-45/Cys-51 and Cys-47/Cys-190. Residue Asp-85 participates in Mg(2+) binding.

The protein belongs to the arthropod phospholipase D family. Class II subfamily. It depends on Mg(2+) as a cofactor. As to expression, expressed by the venom gland.

The protein resides in the secreted. It catalyses the reaction an N-(acyl)-sphingosylphosphocholine = an N-(acyl)-sphingosyl-1,3-cyclic phosphate + choline. It carries out the reaction an N-(acyl)-sphingosylphosphoethanolamine = an N-(acyl)-sphingosyl-1,3-cyclic phosphate + ethanolamine. The enzyme catalyses a 1-acyl-sn-glycero-3-phosphocholine = a 1-acyl-sn-glycero-2,3-cyclic phosphate + choline. The catalysed reaction is a 1-acyl-sn-glycero-3-phosphoethanolamine = a 1-acyl-sn-glycero-2,3-cyclic phosphate + ethanolamine. In terms of biological role, dermonecrotic toxins cleave the phosphodiester linkage between the phosphate and headgroup of certain phospholipids (sphingolipid and lysolipid substrates), forming an alcohol (often choline) and a cyclic phosphate. This toxin acts on sphingomyelin (SM). It may also act on ceramide phosphoethanolamine (CPE), lysophosphatidylcholine (LPC) and lysophosphatidylethanolamine (LPE), but not on lysophosphatidylserine (LPS), and lysophosphatidylglycerol (LPG). It acts by transphosphatidylation, releasing exclusively cyclic phosphate products as second products. Induces dermonecrosis, hemolysis, increased vascular permeability, edema, inflammatory response, and platelet aggregation. This Loxosceles spadicea (Recluse spider) protein is Dermonecrotic toxin LspaSicTox-alphaII1.